Consider the following 304-residue polypeptide: UDP-N-acetylenolpyruvoylglucosamine reductase (304 aa).

Residues 34–198 (IGGKADFLVW…LEVVFALQPG (165 aa)) enclose the FAD-binding PCMH-type domain. Residue arginine 177 is part of the active site. The active-site Proton donor is the serine 227. Residue glutamate 297 is part of the active site.

This sequence belongs to the MurB family. It depends on FAD as a cofactor.

It localises to the cytoplasm. The catalysed reaction is UDP-N-acetyl-alpha-D-muramate + NADP(+) = UDP-N-acetyl-3-O-(1-carboxyvinyl)-alpha-D-glucosamine + NADPH + H(+). Its pathway is cell wall biogenesis; peptidoglycan biosynthesis. Its function is as follows. Cell wall formation. The polypeptide is UDP-N-acetylenolpyruvoylglucosamine reductase (Geobacillus thermodenitrificans (strain NG80-2)).